A 352-amino-acid chain; its full sequence is Selenide, water dikinase (352 aa).

C23 is a catalytic residue. ATP contacts are provided by residues K26 and S54–D56. D57 serves as a coordination point for Mg(2+). Residues D74, D97, and G145 to S147 contribute to the ATP site. Residue D97 coordinates Mg(2+). D233 lines the Mg(2+) pocket.

The protein belongs to the selenophosphate synthase 1 family. Class I subfamily. Homodimer. It depends on Mg(2+) as a cofactor.

It carries out the reaction hydrogenselenide + ATP + H2O = selenophosphate + AMP + phosphate + 2 H(+). Functionally, synthesizes selenophosphate from selenide and ATP. The protein is Selenide, water dikinase of Shewanella sp. (strain MR-7).